A 564-amino-acid polypeptide reads, in one-letter code: Hsp70-Hsp90 organising protein (564 aa).

3 TPR repeats span residues 7 to 40 (AQRL…DPLD), 42 to 74 (VLYS…KKDW), and 76 to 108 (KGYI…DPNN). The stretch at 197–239 (EGNDAEERQRQQREEEERRKKKEEEERKKKEEEEMKKQNRTPE) forms a coiled coil. Residues 199–247 (NDAEERQRQQREEEERRKKKEEEERKKKEEEEMKKQNRTPEQIQGDEHK) form a disordered region. Residues 201 to 233 (AEERQRQQREEEERRKKKEEEERKKKEEEEMKK) show a composition bias toward basic and acidic residues. 6 TPR repeats span residues 243–276 (GDEH…NPND), 278–310 (MYHY…RYNF), 318–351 (AKLY…DNNR), 378–411 (AEEH…NPND), 413–445 (KLYS…DPTF), and 446–479 (VKAY…DPNN). Positions 513 to 552 (DPEIQQIISDPQFQIILQKLNENPNSISEYIKDPKIFNGL) constitute an STI1 domain.

As to quaternary structure, monomer. Homodimer. Forms a complex composed of HOP and chaperones HSP70 and HSP90; the interaction is stronger in the absence of ATP. Interacts (via TPR 1, 2, 3, 7, 8 and 9 repeats) with HSP70 (via C-terminus); the interaction is direct and is stronger in the absence of ATP. Interacts (via TPR 4, 5 and 6 repeats) with HSP90 (via C-terminus); the interaction is direct.

Its subcellular location is the cytoplasm. Acts as a co-chaperone and mediates the association of the chaperones HSP70 and HSP90 probably facilitating substrate transfer from HSP70 to HSP90. Stimulates HSP70 ATPase activity and, in contrast, inhibits HSP90 ATPase activity. This is Hsp70-Hsp90 organising protein from Plasmodium falciparum (isolate 3D7).